The primary structure comprises 150 residues: Large ribosomal subunit protein bL9 (150 aa).

This sequence belongs to the bacterial ribosomal protein bL9 family.

In terms of biological role, binds to the 23S rRNA. This Corynebacterium diphtheriae (strain ATCC 700971 / NCTC 13129 / Biotype gravis) protein is Large ribosomal subunit protein bL9.